We begin with the raw amino-acid sequence, 898 residues long: MITMSHQLEKLGYRKYECRSCGNTFWSMKERATCGDAPCDEYGFIGNPATDRSYDLYEIQDKFMEFFAERGHEPIRRYPVLAKRWRDDVFLVGASIYNFQPWVTSGLVKPPANPLVVAQPSIRLNDVDNVGRTGRHLTCFTMGGHHAFNSEDNTVYWEEETIKYCHDFLTHIGIDPSEITFIESWWQGGGNEGPCYEVCVRGVELATLVFIQYRTLPDGGREEIPLKIVDTGYGLERFAWISQGTPTAYDACLGPVIEKLVELTGVKIDEEILAENAQVAGMMDIETYADLRELRKRVADKLGISVEELERAAAPMESVYAIADHTRCLAFMLADGVIPSNVKEGYLARLIIRRTLRLMKDLGMKESLKDIMNIQVEFLEGHYPEIRSHHEHILNIIDLEEHRYARTVKRGRRIVEKTIKYLKRDGKAEMPLEILIKLYDSHGIPPETIGEIAEESGFQVKIPDNFYTLVAERNETETEMPEEDVHLDYPATELLFYDEPDDLEFQAEVIGIHENGLILDRTLFYPEGGGQPSDTGYITAEGCRLRIKHAEKIGAVVVHRTDDEICIEPGTTIRGFIDSDRRLQLTRNHTATHLIVSAARKVLGDHIWQAGAQKGVKSSRLDLSHYRRITLEELQEIERLANEYVMMNVPLKVRWMDRDLAERKYGFILYQGGVVPGSRIRVVEIPGVDVQACAGTHVHRTGDIGLIRINRTERIQDGVERIEFSAGSAAIEIMQKTGDILRESSDIFKVTPSQLPGTCERFFTEWKALRNEVSRLKEKVASLKILEMKDRAERINDLTVIIDTVDADMDEMKNMALELSATVDAVVLANPEGKIVGAASEDAVKAGLRINEVISQAAAVLGGGGGGRPHLAQGAGPATDKVDEALEEARAALSTVRN.

The Zn(2+) site is built by histidine 589, histidine 593, cysteine 693, and histidine 697.

Belongs to the class-II aminoacyl-tRNA synthetase family. Requires Zn(2+) as cofactor.

It is found in the cytoplasm. The catalysed reaction is tRNA(Ala) + L-alanine + ATP = L-alanyl-tRNA(Ala) + AMP + diphosphate. In terms of biological role, catalyzes the attachment of alanine to tRNA(Ala) in a two-step reaction: alanine is first activated by ATP to form Ala-AMP and then transferred to the acceptor end of tRNA(Ala). Also edits incorrectly charged Ser-tRNA(Ala) and Gly-tRNA(Ala) via its editing domain. This is Alanine--tRNA ligase from Methanothermobacter thermautotrophicus (strain ATCC 29096 / DSM 1053 / JCM 10044 / NBRC 100330 / Delta H) (Methanobacterium thermoautotrophicum).